Here is a 209-residue protein sequence, read N- to C-terminus: Large ribosomal subunit protein uL3 (209 aa).

This sequence belongs to the universal ribosomal protein uL3 family. Part of the 50S ribosomal subunit. Forms a cluster with proteins L14 and L19.

Functionally, one of the primary rRNA binding proteins, it binds directly near the 3'-end of the 23S rRNA, where it nucleates assembly of the 50S subunit. The polypeptide is Large ribosomal subunit protein uL3 (Nitratidesulfovibrio vulgaris (strain DSM 19637 / Miyazaki F) (Desulfovibrio vulgaris)).